A 311-amino-acid polypeptide reads, in one-letter code: Aspartate carbamoyltransferase catalytic subunit (311 aa).

The carbamoyl phosphate site is built by Arg58 and Thr59. Lys86 serves as a coordination point for L-aspartate. Carbamoyl phosphate is bound by residues Arg108, His136, and Gln139. Residues Arg169 and Arg224 each contribute to the L-aspartate site. Carbamoyl phosphate contacts are provided by Gly265 and Pro266.

This sequence belongs to the aspartate/ornithine carbamoyltransferase superfamily. ATCase family. In terms of assembly, heterododecamer (2C3:3R2) of six catalytic PyrB chains organized as two trimers (C3), and six regulatory PyrI chains organized as three dimers (R2).

It carries out the reaction carbamoyl phosphate + L-aspartate = N-carbamoyl-L-aspartate + phosphate + H(+). The protein operates within pyrimidine metabolism; UMP biosynthesis via de novo pathway; (S)-dihydroorotate from bicarbonate: step 2/3. Catalyzes the condensation of carbamoyl phosphate and aspartate to form carbamoyl aspartate and inorganic phosphate, the committed step in the de novo pyrimidine nucleotide biosynthesis pathway. This Geobacter sulfurreducens (strain ATCC 51573 / DSM 12127 / PCA) protein is Aspartate carbamoyltransferase catalytic subunit.